A 631-amino-acid chain; its full sequence is Phosphomethylpyrimidine synthase (631 aa).

Substrate contacts are provided by residues Asn-239, Met-268, Tyr-297, His-333, 353 to 355, 394 to 397, and Glu-433; these read SRG and DGLR. His-437 serves as a coordination point for Zn(2+). Tyr-460 is a substrate binding site. His-501 provides a ligand contact to Zn(2+). [4Fe-4S] cluster-binding residues include Cys-581, Cys-584, and Cys-589.

Belongs to the ThiC family. Homodimer. [4Fe-4S] cluster is required as a cofactor.

It catalyses the reaction 5-amino-1-(5-phospho-beta-D-ribosyl)imidazole + S-adenosyl-L-methionine = 4-amino-2-methyl-5-(phosphooxymethyl)pyrimidine + CO + 5'-deoxyadenosine + formate + L-methionine + 3 H(+). It functions in the pathway cofactor biosynthesis; thiamine diphosphate biosynthesis. In terms of biological role, catalyzes the synthesis of the hydroxymethylpyrimidine phosphate (HMP-P) moiety of thiamine from aminoimidazole ribotide (AIR) in a radical S-adenosyl-L-methionine (SAM)-dependent reaction. The chain is Phosphomethylpyrimidine synthase from Escherichia coli (strain 55989 / EAEC).